A 165-amino-acid polypeptide reads, in one-letter code: V-type proton ATPase 16 kDa proteolipid subunit (165 aa).

At 1 to 12 (MSTVFNGDETAP) the chain is on the lumenal side. Residues 13 to 33 (FFGFLGAAAALVFSCMGAAYG) form a helical membrane-spanning segment. Residues 34–55 (TAKSGVGVASMGVMRPELVMKS) lie on the Cytoplasmic side of the membrane. A helical membrane pass occupies residues 56–76 (IVPVVMAGVLGIYGLIIAVII). The Lumenal segment spans residues 77-95 (STGINPKAKSYYLFDGYAH). A helical transmembrane segment spans residues 96-117 (LSSGLACGLAGLSAGMAIGIVG). The Cytoplasmic segment spans residues 118–129 (DAGVRANAQQPK). Residues 130–155 (LFVGMILILIFAEALALYGLIVGIIL) traverse the membrane as a helical segment. The Lumenal segment spans residues 156–165 (SSRAGQSRAD).

This sequence belongs to the V-ATPase proteolipid subunit family. As to quaternary structure, V-ATPase is a heteromultimeric enzyme composed of a peripheral catalytic V1 complex (main components: subunits A, B, C, D, E, and F) attached to an integral membrane V0 proton pore complex (main component: the proteolipid protein; which is present as a hexamer that forms the proton-conducting pore).

The protein localises to the vacuole membrane. In terms of biological role, proton-conducting pore forming subunit of the membrane integral V0 complex of vacuolar ATPase. V-ATPase is responsible for acidifying a variety of intracellular compartments in eukaryotic cells. The chain is V-type proton ATPase 16 kDa proteolipid subunit (VMAC1) from Mesembryanthemum crystallinum (Common ice plant).